A 418-amino-acid chain; its full sequence is AP-1 complex subunit mu (418 aa).

The MHD domain maps to 176–417 (NNEAYFDVTE…VTKAGKFQVR (242 aa)).

It belongs to the adaptor complexes medium subunit family. As to quaternary structure, adaptor protein complex 1 (AP-1) is a heterotetramer composed of two large adaptins (gamma- and beta'-type subunits), a medium adaptin (mu-type subunit AP47) and a small adaptin (sigma-type subunit AP19). Regulated by phosphorylation.

The protein localises to the golgi apparatus. It is found in the cytoplasmic vesicle. Its subcellular location is the clathrin-coated vesicle membrane. Functionally, component of the adapter complexes which link clathrin to receptors in coated vesicles. Clathrin-associated protein complexes are believed to interact with the cytoplasmic tails of membrane proteins, leading to their selection and concentration. AP47 is a subunit of the plasma membrane adapter. This Diplobatis ommata (Ocellated electric ray) protein is AP-1 complex subunit mu.